The following is a 69-amino-acid chain: uncharacterized protein (69 aa).

Positions 1–16 (MSLGLIFALLLTHAAA) are cleaved as a signal peptide.

This is an uncharacterized protein from Archaeoglobus fulgidus (strain ATCC 49558 / DSM 4304 / JCM 9628 / NBRC 100126 / VC-16).